Here is a 201-residue protein sequence, read N- to C-terminus: Arachin 25 kDa protein (201 aa).

This is one of six apparently different protein chains that constitute the peanut protein arachin.

This Arachis hypogaea (Peanut) protein is Arachin 25 kDa protein.